The chain runs to 149 residues: Large ribosomal subunit protein bL9 (149 aa).

It belongs to the bacterial ribosomal protein bL9 family.

Binds to the 23S rRNA. This chain is Large ribosomal subunit protein bL9, found in Teredinibacter turnerae (strain ATCC 39867 / T7901).